Consider the following 216-residue polypeptide: Urease operon 23 kDa accessory protein (216 aa).

Involved in the expression of hydrogenase activity. May be a regulatory gene affecting the expression of the hydrogenase operon or could be involved in the process of nickel incorporation into the hydrogenase apoenzyme. The sequence is that of Urease operon 23 kDa accessory protein from Rhizobium meliloti (strain 1021) (Ensifer meliloti).